The following is a 363-amino-acid chain: 2,5-diketocamphane 1,2-monooxygenase 1 (363 aa).

Residues M74 and 186–194 contribute to the FMN site; that span reads TGLTKNSSS.

Belongs to the bacterial luciferase oxidoreductase family. Homodimer. Likely forms a loose transient complex with a P.putida flavin reductase that provides the required FMNH(2) to the enzyme.

The enzyme catalyses (1R,4R)-bornane-2,5-dione + FMNH2 + O2 = (1R,4R)-5-oxo-1,2-campholide + FMN + H2O + H(+). The protein operates within terpene metabolism; (R)-camphor degradation. In terms of biological role, involved in the degradation and assimilation of (+)-camphor, which allows P.putida strain NCIMB 10007 to grow on this enantiomer of camphor as the sole carbon source. Catalyzes the FMNH(2)-dependent lactonization of 2,5-diketocamphane via a Baeyer-Villiger oxidation to produce the unstable lactone 5-oxo-1,2-campholide with (R,R) configuration, that presumably undergoes spontaneous hydrolysis to form 2-oxo-Delta(3)-4,5,5-trimethylcyclopentenylacetate. Is also able to convert (+)-camphor and norcamphor to the corresponding lactone in vitro. Shows no conversion of (-)-camphor, (+)-fenchone, (-)-fenchone, and (+)-nopinone. Acts only on bicyclic ketones; is not active towards monocyclic ketones, aromatic ketones, the aliphatic 2-decanone, 1-indanone and progesterone. This chain is 2,5-diketocamphane 1,2-monooxygenase 1, found in Pseudomonas putida (Arthrobacter siderocapsulatus).